The chain runs to 428 residues: Light-independent protochlorophyllide reductase subunit N (428 aa).

Residues Cys-29, Cys-54, and Cys-115 each coordinate [4Fe-4S] cluster.

Belongs to the BchN/ChlN family. As to quaternary structure, protochlorophyllide reductase is composed of three subunits; BchL, BchN and BchB. Forms a heterotetramer of two BchB and two BchN subunits. [4Fe-4S] cluster serves as cofactor.

The enzyme catalyses chlorophyllide a + oxidized 2[4Fe-4S]-[ferredoxin] + 2 ADP + 2 phosphate = protochlorophyllide a + reduced 2[4Fe-4S]-[ferredoxin] + 2 ATP + 2 H2O. The protein operates within porphyrin-containing compound metabolism; bacteriochlorophyll biosynthesis (light-independent). Component of the dark-operative protochlorophyllide reductase (DPOR) that uses Mg-ATP and reduced ferredoxin to reduce ring D of protochlorophyllide (Pchlide) to form chlorophyllide a (Chlide). This reaction is light-independent. The NB-protein (BchN-BchB) is the catalytic component of the complex. The sequence is that of Light-independent protochlorophyllide reductase subunit N from Cereibacter sphaeroides (strain ATCC 17025 / ATH 2.4.3) (Rhodobacter sphaeroides).